Consider the following 743-residue polypeptide: 1,4-alpha-glucan branching enzyme GlgB (743 aa).

Residue Asp416 is the Nucleophile of the active site. The Proton donor role is filled by Glu469.

Belongs to the glycosyl hydrolase 13 family. GlgB subfamily. Monomer.

It carries out the reaction Transfers a segment of a (1-&gt;4)-alpha-D-glucan chain to a primary hydroxy group in a similar glucan chain.. The protein operates within glycan biosynthesis; glycogen biosynthesis. Functionally, catalyzes the formation of the alpha-1,6-glucosidic linkages in glycogen by scission of a 1,4-alpha-linked oligosaccharide from growing alpha-1,4-glucan chains and the subsequent attachment of the oligosaccharide to the alpha-1,6 position. The sequence is that of 1,4-alpha-glucan branching enzyme GlgB from Shewanella baltica (strain OS155 / ATCC BAA-1091).